Consider the following 428-residue polypeptide: Histidinol dehydrogenase (428 aa).

The NAD(+) site is built by tyrosine 124, glutamine 186, and asparagine 209. Substrate is bound by residues serine 233, glutamine 255, and histidine 258. Zn(2+) contacts are provided by glutamine 255 and histidine 258. Active-site proton acceptor residues include glutamate 322 and histidine 323. Positions 323, 356, 410, and 415 each coordinate substrate. Aspartate 356 contributes to the Zn(2+) binding site. Residue histidine 415 coordinates Zn(2+).

Belongs to the histidinol dehydrogenase family. Zn(2+) serves as cofactor.

It carries out the reaction L-histidinol + 2 NAD(+) + H2O = L-histidine + 2 NADH + 3 H(+). The protein operates within amino-acid biosynthesis; L-histidine biosynthesis; L-histidine from 5-phospho-alpha-D-ribose 1-diphosphate: step 9/9. Catalyzes the sequential NAD-dependent oxidations of L-histidinol to L-histidinaldehyde and then to L-histidine. This is Histidinol dehydrogenase from Bacteroides fragilis (strain YCH46).